The following is a 20-amino-acid chain: Toxin b subunit beta (20 aa).

As to quaternary structure, toxin b is a heterodimer composed of toxin alpha and toxin beta. As to expression, expressed by the venom gland.

The protein localises to the secreted. Binds to sodium channels (Nav) and affects the channel activation process. The polypeptide is Toxin b subunit beta (Androctonus crassicauda (Arabian fat-tailed scorpion)).